The following is a 283-amino-acid chain: Bifunctional protein FolD (283 aa).

Residues 165–167 (GRG), Thr-192, and Val-233 contribute to the NADP(+) site.

The protein belongs to the tetrahydrofolate dehydrogenase/cyclohydrolase family. In terms of assembly, homodimer.

The catalysed reaction is (6R)-5,10-methylene-5,6,7,8-tetrahydrofolate + NADP(+) = (6R)-5,10-methenyltetrahydrofolate + NADPH. It catalyses the reaction (6R)-5,10-methenyltetrahydrofolate + H2O = (6R)-10-formyltetrahydrofolate + H(+). It participates in one-carbon metabolism; tetrahydrofolate interconversion. Its function is as follows. Catalyzes the oxidation of 5,10-methylenetetrahydrofolate to 5,10-methenyltetrahydrofolate and then the hydrolysis of 5,10-methenyltetrahydrofolate to 10-formyltetrahydrofolate. The protein is Bifunctional protein FolD of Mycolicibacterium smegmatis (strain ATCC 700084 / mc(2)155) (Mycobacterium smegmatis).